The following is a 321-amino-acid chain: Glucokinase (321 aa).

8 to 13 is an ATP binding site; it reads GDVGGT.

Belongs to the bacterial glucokinase family.

It localises to the cytoplasm. The enzyme catalyses D-glucose + ATP = D-glucose 6-phosphate + ADP + H(+). This chain is Glucokinase, found in Salmonella choleraesuis (strain SC-B67).